Here is a 146-residue protein sequence, read N- to C-terminus: Large ribosomal subunit protein bL9 (146 aa).

This sequence belongs to the bacterial ribosomal protein bL9 family.

Binds to the 23S rRNA. This chain is Large ribosomal subunit protein bL9, found in Symbiobacterium thermophilum (strain DSM 24528 / JCM 14929 / IAM 14863 / T).